A 257-amino-acid chain; its full sequence is Phosphonates import ATP-binding protein PhnC (257 aa).

An ABC transporter domain is found at 4–248 (IEFKDVRKVY…AFNEIYGRSI (245 aa)). 37-44 (GLSGSGKS) provides a ligand contact to ATP.

It belongs to the ABC transporter superfamily. Phosphonates importer (TC 3.A.1.9.1) family. As to quaternary structure, the complex is composed of two ATP-binding proteins (PhnC), two transmembrane proteins (PhnE) and a solute-binding protein (PhnD).

It is found in the cell membrane. The catalysed reaction is phosphonate(out) + ATP + H2O = phosphonate(in) + ADP + phosphate + H(+). Part of the ABC transporter complex PhnCDE involved in phosphonates import. Responsible for energy coupling to the transport system. The protein is Phosphonates import ATP-binding protein PhnC of Staphylococcus saprophyticus subsp. saprophyticus (strain ATCC 15305 / DSM 20229 / NCIMB 8711 / NCTC 7292 / S-41).